A 256-amino-acid chain; its full sequence is Thiazole synthase (256 aa).

The active-site Schiff-base intermediate with DXP is lysine 95. 1-deoxy-D-xylulose 5-phosphate is bound by residues glycine 156, 182–183 (AG), and 204–205 (NT).

This sequence belongs to the ThiG family. As to quaternary structure, homotetramer. Forms heterodimers with either ThiH or ThiS.

It is found in the cytoplasm. The enzyme catalyses [ThiS sulfur-carrier protein]-C-terminal-Gly-aminoethanethioate + 2-iminoacetate + 1-deoxy-D-xylulose 5-phosphate = [ThiS sulfur-carrier protein]-C-terminal Gly-Gly + 2-[(2R,5Z)-2-carboxy-4-methylthiazol-5(2H)-ylidene]ethyl phosphate + 2 H2O + H(+). The protein operates within cofactor biosynthesis; thiamine diphosphate biosynthesis. Catalyzes the rearrangement of 1-deoxy-D-xylulose 5-phosphate (DXP) to produce the thiazole phosphate moiety of thiamine. Sulfur is provided by the thiocarboxylate moiety of the carrier protein ThiS. In vitro, sulfur can be provided by H(2)S. The polypeptide is Thiazole synthase (Escherichia coli O17:K52:H18 (strain UMN026 / ExPEC)).